Consider the following 286-residue polypeptide: Probable aquaporin PIP2-5 (286 aa).

At Met-1 the chain carries N-acetylmethionine. Positions 1 to 18 (MTKEVVGDKRSFSGKDYQ) are enriched in basic and acidic residues. Residues 1-23 (MTKEVVGDKRSFSGKDYQDPPPE) are disordered. Topologically, residues 1–38 (MTKEVVGDKRSFSGKDYQDPPPEPLFDATELGKWSFYR) are cytoplasmic. Lys-3 bears the N6,N6-dimethyllysine mark. The chain crosses the membrane as a helical span at residues 39-59 (ALIAEFIATLLFLYVTIMTVI). The Extracellular portion of the chain corresponds to 60-75 (GYKSQTDPALNPDQCT). The helical transmembrane segment at 76-96 (GVGVLGIAWAFGGMIFILVYC) threads the bilayer. The Cytoplasmic segment spans residues 97 to 124 (TAGISGGHINPAVTFGLLLARKVTLVRA). The NPA 1 signature appears at 106–108 (NPA). The chain crosses the membrane as a helical span at residues 125-145 (VMYMVAQCLGAICGVALVKAF). The Extracellular segment spans residues 146 to 165 (QSAYFTRYGGGANGLSDGYS). Residues 166–186 (IGTGVAAEIIGTFVLVYTVFS) traverse the membrane as a helical segment. Residues 187 to 200 (ATDPKRSARDSHVP) lie on the Cytoplasmic side of the membrane. A helical membrane pass occupies residues 201–221 (VLAPLPIGFAVFIVHLATIPI). At 222 to 248 (TGTGINPARSLGAAIIYNKDKAWDHHW) the chain is on the extracellular side. The NPA 2 signature appears at 227–229 (NPA). Residues 249-269 (IFWVGPFAGAAIAAFYHQFVL) form a helical membrane-spanning segment. The Cytoplasmic portion of the chain corresponds to 270 to 286 (RAGAIKALGSFRSQPHV). Phosphoserine is present on residues Ser-279 and Ser-282.

Belongs to the MIP/aquaporin (TC 1.A.8) family. PIP (TC 1.A.8.11) subfamily. In terms of tissue distribution, expressed in green siliques.

The protein resides in the cell membrane. Aquaporins facilitate the transport of water and small neutral solutes across cell membranes. The sequence is that of Probable aquaporin PIP2-5 (PIP2-5) from Arabidopsis thaliana (Mouse-ear cress).